A 336-amino-acid polypeptide reads, in one-letter code: tRNA N6-adenosine threonylcarbamoyltransferase (336 aa).

Fe cation-binding residues include H114 and H118. Substrate-binding positions include 136-140 (LVSGG), D169, G182, D186, and N275. Position 301 (D301) interacts with Fe cation.

It belongs to the KAE1 / TsaD family. It depends on Fe(2+) as a cofactor.

Its subcellular location is the cytoplasm. It catalyses the reaction L-threonylcarbamoyladenylate + adenosine(37) in tRNA = N(6)-L-threonylcarbamoyladenosine(37) in tRNA + AMP + H(+). Required for the formation of a threonylcarbamoyl group on adenosine at position 37 (t(6)A37) in tRNAs that read codons beginning with adenine. Is involved in the transfer of the threonylcarbamoyl moiety of threonylcarbamoyl-AMP (TC-AMP) to the N6 group of A37, together with TsaE and TsaB. TsaD likely plays a direct catalytic role in this reaction. This is tRNA N6-adenosine threonylcarbamoyltransferase from Streptococcus pneumoniae (strain ATCC 700669 / Spain 23F-1).